The primary structure comprises 115 residues: Large ribosomal subunit protein bL20 (115 aa).

This sequence belongs to the bacterial ribosomal protein bL20 family.

In terms of biological role, binds directly to 23S ribosomal RNA and is necessary for the in vitro assembly process of the 50S ribosomal subunit. It is not involved in the protein synthesizing functions of that subunit. The chain is Large ribosomal subunit protein bL20 from Microcystis aeruginosa (strain NIES-843 / IAM M-2473).